We begin with the raw amino-acid sequence, 398 residues long: Enoyl-[acyl-carrier-protein] reductase [NADH] (398 aa).

NAD(+) contacts are provided by residues 48–53 (GSSTGY), 74–75 (FE), 111–112 (DA), and 139–140 (LA). Residue Y225 participates in substrate binding. Catalysis depends on Y235, which acts as the Proton donor. Residues K244 and 273–275 (VVT) each bind NAD(+).

Belongs to the TER reductase family. Monomer.

The catalysed reaction is a 2,3-saturated acyl-[ACP] + NAD(+) = a (2E)-enoyl-[ACP] + NADH + H(+). Its pathway is lipid metabolism; fatty acid biosynthesis. Involved in the final reduction of the elongation cycle of fatty acid synthesis (FAS II). Catalyzes the reduction of a carbon-carbon double bond in an enoyl moiety that is covalently linked to an acyl carrier protein (ACP). This is Enoyl-[acyl-carrier-protein] reductase [NADH] from Pseudomonas aeruginosa (strain UCBPP-PA14).